Here is a 222-residue protein sequence, read N- to C-terminus: Small ribosomal subunit protein uS3 (222 aa).

A KH type-2 domain is found at 38–106; the sequence is IRKFISEKLA…NVHINIVEIK (69 aa).

This sequence belongs to the universal ribosomal protein uS3 family. Part of the 30S ribosomal subunit. Forms a tight complex with proteins S10 and S14.

Its function is as follows. Binds the lower part of the 30S subunit head. Binds mRNA in the 70S ribosome, positioning it for translation. This Lactobacillus gasseri (strain ATCC 33323 / DSM 20243 / BCRC 14619 / CIP 102991 / JCM 1131 / KCTC 3163 / NCIMB 11718 / NCTC 13722 / AM63) protein is Small ribosomal subunit protein uS3.